A 257-amino-acid polypeptide reads, in one-letter code: Small ribosomal subunit protein eS1 (257 aa).

Positions 237 to 257 (GADGEKVDRPDDYEPPVQQEV) are disordered. Over residues 239–248 (DGEKVDRPDD) the composition is skewed to basic and acidic residues.

Belongs to the eukaryotic ribosomal protein eS1 family. As to quaternary structure, component of the small ribosomal subunit. Mature ribosomes consist of a small (40S) and a large (60S) subunit. The 40S subunit contains about 33 different proteins and 1 molecule of RNA (18S). The 60S subunit contains about 49 different proteins and 3 molecules of RNA (28S, 5.8S and 5S).

Its subcellular location is the cytoplasm. In Caenorhabditis elegans, this protein is Small ribosomal subunit protein eS1.